Consider the following 1330-residue polypeptide: DNA-directed RNA polymerase subunit beta'' (1330 aa).

The Zn(2+) site is built by Cys214, Cys282, Cys289, and Cys292.

It belongs to the RNA polymerase beta' chain family. RpoC2 subfamily. In terms of assembly, in plastids the minimal PEP RNA polymerase catalytic core is composed of four subunits: alpha, beta, beta', and beta''. When a (nuclear-encoded) sigma factor is associated with the core the holoenzyme is formed, which can initiate transcription. Requires Zn(2+) as cofactor.

The protein localises to the plastid. It localises to the chloroplast. The enzyme catalyses RNA(n) + a ribonucleoside 5'-triphosphate = RNA(n+1) + diphosphate. In terms of biological role, DNA-dependent RNA polymerase catalyzes the transcription of DNA into RNA using the four ribonucleoside triphosphates as substrates. This chain is DNA-directed RNA polymerase subunit beta'', found in Physcomitrium patens (Spreading-leaved earth moss).